Reading from the N-terminus, the 311-residue chain is Fructose-1,6-bisphosphatase class 1 (311 aa).

Residues glutamate 90, aspartate 110, leucine 112, and aspartate 113 each coordinate Mg(2+). Residues 113–116 (DGSS), tyrosine 221, and lysine 251 contribute to the substrate site. Mg(2+) is bound at residue glutamate 257.

The protein belongs to the FBPase class 1 family. Homotetramer. The cofactor is Mg(2+).

The protein resides in the cytoplasm. It carries out the reaction beta-D-fructose 1,6-bisphosphate + H2O = beta-D-fructose 6-phosphate + phosphate. It participates in carbohydrate biosynthesis; gluconeogenesis. The protein is Fructose-1,6-bisphosphatase class 1 of Methanospirillum hungatei JF-1 (strain ATCC 27890 / DSM 864 / NBRC 100397 / JF-1).